A 138-amino-acid polypeptide reads, in one-letter code: Translation initiation factor 2 subunit beta (138 aa).

The protein belongs to the eIF-2-beta/eIF-5 family. In terms of assembly, heterotrimer composed of an alpha, a beta and a gamma chain.

Functionally, eIF-2 functions in the early steps of protein synthesis by forming a ternary complex with GTP and initiator tRNA. The protein is Translation initiation factor 2 subunit beta of Methanococcus maripaludis (strain C6 / ATCC BAA-1332).